Consider the following 68-residue polypeptide: UPF0434 protein BMA10229_A1047 (68 aa).

Belongs to the UPF0434 family.

This chain is UPF0434 protein BMA10229_A1047, found in Burkholderia mallei (strain NCTC 10229).